The following is a 385-amino-acid chain: Aspartate/prephenate aminotransferase (385 aa).

L-aspartate-binding residues include Gly39, Trp125, and Asn175. Lys234 carries the post-translational modification N6-(pyridoxal phosphate)lysine. Arg361 is an L-aspartate binding site.

Belongs to the class-I pyridoxal-phosphate-dependent aminotransferase family. In terms of assembly, homodimer. Pyridoxal 5'-phosphate serves as cofactor.

The protein resides in the cytoplasm. It carries out the reaction L-aspartate + 2-oxoglutarate = oxaloacetate + L-glutamate. The enzyme catalyses L-arogenate + oxaloacetate = prephenate + L-aspartate. In terms of biological role, catalyzes the reversible conversion of aspartate and 2-oxoglutarate to glutamate and oxaloacetate. Can also transaminate prephenate in the presence of aspartate. The chain is Aspartate/prephenate aminotransferase (aspC) from Thermus thermophilus (strain ATCC 27634 / DSM 579 / HB8).